A 193-amino-acid chain; its full sequence is Mediator of RNA polymerase II transcription subunit 20 (193 aa).

This sequence belongs to the Mediator complex subunit 20 family. As to quaternary structure, component of the Mediator complex.

Its subcellular location is the nucleus. Component of the Mediator complex, a coactivator involved in the regulated transcription of nearly all RNA polymerase II-dependent genes. Mediator functions as a bridge to convey information from gene-specific regulatory proteins to the basal RNA polymerase II transcription machinery. The Mediator complex, having a compact conformation in its free form, is recruited to promoters by direct interactions with regulatory proteins and serves for the assembly of a functional preinitiation complex with RNA polymerase II and the general transcription factors. The sequence is that of Mediator of RNA polymerase II transcription subunit 20 (med20) from Schizosaccharomyces pombe (strain 972 / ATCC 24843) (Fission yeast).